Reading from the N-terminus, the 54-residue chain is Large ribosomal subunit protein bL33B (54 aa).

Belongs to the bacterial ribosomal protein bL33 family.

The polypeptide is Large ribosomal subunit protein bL33B (Mycobacterium sp. (strain KMS)).